A 95-amino-acid polypeptide reads, in one-letter code: MAGAPHPHTYMGWWGSLGSPKQKYITQYTISPYAAKPLKGAAYNAVFNTFRRTKNQFLYVAIPFVVVWSIWTRARDYNEYLYTKEGREELERVNV.

A helical transmembrane segment spans residues Phe57–Ala74.

This sequence belongs to the UQCRQ/QCR8 family. In terms of assembly, component of the ubiquinol-cytochrome c oxidoreductase (cytochrome b-c1 complex, complex III, CIII), a multisubunit enzyme composed of 10 subunits. The complex is composed of 3 respiratory subunits cytochrome b (COB), cytochrome c1 (CYT1) and Rieske protein (RIP1), 2 core protein subunits COR1 and QCR2, and 5 low-molecular weight protein subunits QCR6, QCR7, QCR8, QCR9 and QCR10. The complex exists as an obligatory dimer and forms supercomplexes (SCs) in the inner mitochondrial membrane with a monomer or a dimer of cytochrome c oxidase (complex IV, CIV), resulting in 2 different assemblies (supercomplexes III(2)IV and III(2)IV(2)).

The protein localises to the membrane. Its subcellular location is the mitochondrion inner membrane. Component of the ubiquinol-cytochrome c oxidoreductase, a multisubunit transmembrane complex that is part of the mitochondrial electron transport chain which drives oxidative phosphorylation. The complex plays an important role in the uptake of multiple carbon sources present in different host niches. This Candida albicans (strain SC5314 / ATCC MYA-2876) (Yeast) protein is Cytochrome b-c1 complex subunit 8, mitochondrial.